The following is a 1084-amino-acid chain: Ribonucleoside-diphosphate reductase NrdEB subunit alpha (1084 aa).

Substrate-binding positions include T152, 168 to 169, and G197; that span reads SC. C169 and C793 are joined by a disulfide. N379 (proton acceptor) is an active-site residue. C381 (cysteine radical intermediate) is an active-site residue. In terms of domain architecture, DOD-type homing endonuclease spans 503–654; it reads IMGIIAGDGT…VQKLLLNMGV (152 aa). Residue E768 is the Proton acceptor of the active site. 964-968 is a binding site for substrate; the sequence is PTGSI.

The protein belongs to the ribonucleoside diphosphate reductase large chain family. As to quaternary structure, tetramer of two alpha and two beta subunits. In terms of processing, this protein undergoes protein self-splicing that involves post-translational excision of the intervening region (intein) followed by peptide ligation.

It catalyses the reaction a 2'-deoxyribonucleoside 5'-diphosphate + [thioredoxin]-disulfide + H2O = a ribonucleoside 5'-diphosphate + [thioredoxin]-dithiol. With respect to regulation, under complex allosteric control mediated by deoxynucleoside triphosphates and ATP binding. The type of nucleotide bound at the specificity site determines substrate preference. It seems probable that ATP makes the enzyme reduce CDP and UDP, dGTP favors ADP reduction and dTTP favors GDP reduction. Functionally, provides the precursors necessary for DNA synthesis. Catalyzes the biosynthesis of deoxyribonucleotides from the corresponding ribonucleotides. The polypeptide is Ribonucleoside-diphosphate reductase NrdEB subunit alpha (nrdEB) (Bacillus subtilis (strain 168)).